We begin with the raw amino-acid sequence, 585 residues long: Aspartate--tRNA ligase (585 aa).

Position 173 (Glu173) interacts with L-aspartate. Positions 197 to 200 are aspartate; that stretch reads QTLK. Arg219 contacts L-aspartate. ATP-binding positions include 219 to 221 and Gln228; that span reads RDE. Residue His446 participates in L-aspartate binding. Glu480 is a binding site for ATP. Position 487 (Arg487) interacts with L-aspartate. 532–535 provides a ligand contact to ATP; sequence GLDR.

Belongs to the class-II aminoacyl-tRNA synthetase family. Type 1 subfamily. Homodimer.

It is found in the cytoplasm. It carries out the reaction tRNA(Asp) + L-aspartate + ATP = L-aspartyl-tRNA(Asp) + AMP + diphosphate. Functionally, catalyzes the attachment of L-aspartate to tRNA(Asp) in a two-step reaction: L-aspartate is first activated by ATP to form Asp-AMP and then transferred to the acceptor end of tRNA(Asp). This chain is Aspartate--tRNA ligase, found in Parabacteroides distasonis (strain ATCC 8503 / DSM 20701 / CIP 104284 / JCM 5825 / NCTC 11152).